A 111-amino-acid chain; its full sequence is Nucleoid-associated protein Ppha_1174 (111 aa).

Belongs to the YbaB/EbfC family. As to quaternary structure, homodimer.

The protein resides in the cytoplasm. It localises to the nucleoid. In terms of biological role, binds to DNA and alters its conformation. May be involved in regulation of gene expression, nucleoid organization and DNA protection. This chain is Nucleoid-associated protein Ppha_1174, found in Pelodictyon phaeoclathratiforme (strain DSM 5477 / BU-1).